We begin with the raw amino-acid sequence, 24 residues long: Brevinin-1JDc (24 aa).

A disulfide bond links Cys-18 and Cys-24.

In terms of tissue distribution, expressed by the skin glands.

It is found in the secreted. Functionally, has antibacterial activity against E.coli ATCC 25992 (MIC=49 uM), E.coli CIB 84492 (MIC=25 uM), S.aureus ATCC 25923 (MIC=6 uM) and S.aureus CIB 85462 (MIC=3 uM). In Odorrana jingdongensis (Jingdong frog), this protein is Brevinin-1JDc.